We begin with the raw amino-acid sequence, 45 residues long: MRVLHVMLSFLNSLLFLPICFCLLQLKATCAVRVKKYSMKKKKKR.

This is an uncharacterized protein from Saccharomyces cerevisiae (strain ATCC 204508 / S288c) (Baker's yeast).